The chain runs to 143 residues: Transcriptional regulator MraZ (143 aa).

2 consecutive SpoVT-AbrB domains span residues 5-47 (THTP…PMQE) and 76-119 (ASSE…DLRT).

The protein belongs to the MraZ family. In terms of assembly, forms oligomers.

Its subcellular location is the cytoplasm. It localises to the nucleoid. The chain is Transcriptional regulator MraZ from Kineococcus radiotolerans (strain ATCC BAA-149 / DSM 14245 / SRS30216).